Reading from the N-terminus, the 461-residue chain is L-seryl-tRNA(Sec) selenium transferase (461 aa).

The residue at position 294 (Lys-294) is an N6-(pyridoxal phosphate)lysine.

Belongs to the SelA family. Requires pyridoxal 5'-phosphate as cofactor.

The protein localises to the cytoplasm. The enzyme catalyses L-seryl-tRNA(Sec) + selenophosphate + H(+) = L-selenocysteinyl-tRNA(Sec) + phosphate. Its pathway is aminoacyl-tRNA biosynthesis; selenocysteinyl-tRNA(Sec) biosynthesis; selenocysteinyl-tRNA(Sec) from L-seryl-tRNA(Sec) (bacterial route): step 1/1. Functionally, converts seryl-tRNA(Sec) to selenocysteinyl-tRNA(Sec) required for selenoprotein biosynthesis. This is L-seryl-tRNA(Sec) selenium transferase from Haemophilus influenzae (strain ATCC 51907 / DSM 11121 / KW20 / Rd).